We begin with the raw amino-acid sequence, 188 residues long: Ion-translocating oxidoreductase complex subunit B (188 aa).

Residues 1 to 23 (MIEAAVSMSALGLGLGLLLGVAA) form a hydrophobic region. Positions 29–88 (ESPPIVDAIEGILPGTNCGACGYPGCRGLAEAMSEGAAPVTACAPGGRDVALALAAIVET) constitute a 4Fe-4S domain. Residues C46, C49, C54, C71, C113, C116, C119, C123, C143, C146, C149, and C153 each contribute to the [4Fe-4S] cluster site. 4Fe-4S ferredoxin-type domains follow at residues 104 to 133 (TVAFIFEDHCTGCMRCFKRCPTDAIIGANR) and 134 to 163 (QIHTVVTDACIGCNACIEACPTEAIVARVK).

This sequence belongs to the 4Fe4S bacterial-type ferredoxin family. RnfB subfamily. As to quaternary structure, the complex is composed of six subunits: RnfA, RnfB, RnfC, RnfD, RnfE and RnfG. Requires [4Fe-4S] cluster as cofactor.

It is found in the cellular chromatophore membrane. Part of a membrane-bound complex that couples electron transfer with translocation of ions across the membrane. The polypeptide is Ion-translocating oxidoreductase complex subunit B (Cereibacter sphaeroides (strain ATCC 17023 / DSM 158 / JCM 6121 / CCUG 31486 / LMG 2827 / NBRC 12203 / NCIMB 8253 / ATH 2.4.1.) (Rhodobacter sphaeroides)).